The primary structure comprises 258 residues: Imidazole glycerol phosphate synthase subunit HisF (258 aa).

Active-site residues include D11 and D130.

It belongs to the HisA/HisF family. Heterodimer of HisH and HisF.

The protein localises to the cytoplasm. The enzyme catalyses 5-[(5-phospho-1-deoxy-D-ribulos-1-ylimino)methylamino]-1-(5-phospho-beta-D-ribosyl)imidazole-4-carboxamide + L-glutamine = D-erythro-1-(imidazol-4-yl)glycerol 3-phosphate + 5-amino-1-(5-phospho-beta-D-ribosyl)imidazole-4-carboxamide + L-glutamate + H(+). Its pathway is amino-acid biosynthesis; L-histidine biosynthesis; L-histidine from 5-phospho-alpha-D-ribose 1-diphosphate: step 5/9. In terms of biological role, IGPS catalyzes the conversion of PRFAR and glutamine to IGP, AICAR and glutamate. The HisF subunit catalyzes the cyclization activity that produces IGP and AICAR from PRFAR using the ammonia provided by the HisH subunit. The polypeptide is Imidazole glycerol phosphate synthase subunit HisF (Yersinia pseudotuberculosis serotype IB (strain PB1/+)).